The primary structure comprises 444 residues: Methylenetetrahydrofolate--tRNA-(uracil-5-)-methyltransferase TrmFO (444 aa).

An FAD-binding site is contributed by 9–14; it reads GAGMAG.

This sequence belongs to the MnmG family. TrmFO subfamily. It depends on FAD as a cofactor.

It localises to the cytoplasm. The enzyme catalyses uridine(54) in tRNA + (6R)-5,10-methylene-5,6,7,8-tetrahydrofolate + NADH + H(+) = 5-methyluridine(54) in tRNA + (6S)-5,6,7,8-tetrahydrofolate + NAD(+). It catalyses the reaction uridine(54) in tRNA + (6R)-5,10-methylene-5,6,7,8-tetrahydrofolate + NADPH + H(+) = 5-methyluridine(54) in tRNA + (6S)-5,6,7,8-tetrahydrofolate + NADP(+). Catalyzes the folate-dependent formation of 5-methyl-uridine at position 54 (M-5-U54) in all tRNAs. This Cereibacter sphaeroides (strain ATCC 17023 / DSM 158 / JCM 6121 / CCUG 31486 / LMG 2827 / NBRC 12203 / NCIMB 8253 / ATH 2.4.1.) (Rhodobacter sphaeroides) protein is Methylenetetrahydrofolate--tRNA-(uracil-5-)-methyltransferase TrmFO.